The following is a 4998-amino-acid chain: SCO-spondin (4998 aa).

Residues 1-17 (MLPLALLFGMLWTQANG) form the signal peptide. In terms of domain architecture, EMI spans 18 to 102 (HWCEQIETVH…ACCPGWGGAH (85 aa)). The region spanning 72–241 (GLCAIYKPPE…KLPGSEPGCL (170 aa)) is the VWFD 1 domain. 2 cysteine pairs are disulfide-bonded: C74/C202 and C103/C240. Residues N88 and N130 are each glycosylated (N-linked (GlcNAc...) asparagine). The region spanning 349–404 (CPGGQLYSDCVSSCPPSCSAVAQGEEGSCGKECVSGCECPTGLFWDGALCVPAAHC) is the TIL 1 domain. Residues 404 to 496 (CPCYHRRQRY…HGACDTGSCL (93 aa)) form the VWFC 1 domain. Positions 442 to 615 (AECAVGGDGH…FQVSGDGRCP (174 aa)) constitute a VWFD 2 domain. 2 disulfide bridges follow: C444–C577 and C468–C614. N-linked (GlcNAc...) asparagine glycosylation is found at N534 and N698. In terms of domain architecture, TIL 2 spans 706–759 (CPGGQVYQECAPVCGHHCGEPEDCKELGICVAGCNCPPGLLWDLEGQCVPPSMC). Residues N771, N790, N824, and N866 are each glycosylated (N-linked (GlcNAc...) asparagine). The 171-residue stretch at 892 to 1062 (GWCQASGAPH…HSWRLNPLCP (171 aa)) folds into the VWFD 3 domain. 3 disulfide bridges follow: C894–C1026, C916–C1061, and C937–C944. The TIL 3 domain occupies 1153–1209 (CEGGQVYEPCGSTCPPTCHDHHSELRWHCQVITCVEGCFCPEGTLLHGGACMKLAAC). N-linked (GlcNAc...) asparagine glycosylation is present at N1230. LDL-receptor class A domains follow at residues 1253–1290 (GCAEGETLCRENGHCVPLEWLCDNQDDCGDGSDEEGCA), 1293–1328 (VCGEGQMSCQSGHCLPLSLICDGQDDCGDGTDEQGC), 1329–1365 (LCPHGSLACADGRCLPPALLCNGHPDCLDAADEESCL), and 1369–1407 (SCISGEVSCVDGTCVRTIQLCDGVWDCPDGADEGPSHCS). 12 disulfide bridges follow: C1254–C1267, C1261–C1280, C1274–C1289, C1294–C1306, C1301–C1319, C1313–C1328, C1330–C1342, C1337–C1355, C1349–C1364, C1370–C1382, C1377–C1395, and C1389–C1406. The interval 1406–1440 (CSLPSLPTPPGGIGQNPSTSSLDTAPSPVGSTSPA) is disordered. Positions 1420 to 1440 (QNPSTSSLDTAPSPVGSTSPA) are enriched in polar residues. 2 consecutive LDL-receptor class A domains span residues 1442-1478 (PCSLLEFQCNSGECTPRGWRCDQEEDCTDGSDELDCG) and 1480-1519 (PCMLYQVPCAHSPHCVSPGQLCDGVTQCPDGSDEDPDVCE). Cystine bridges form between C1443–C1455, C1450–C1468, C1462–C1477, C1481–C1494, C1488–C1507, and C1501–C1518. N1528 carries N-linked (GlcNAc...) asparagine glycosylation. Residues 1533–1571 (PCPEFSCPDGTCIDFLLVCDGNPDCELADETEPSLDEQG) enclose the LDL-receptor class A 7 domain. Intrachain disulfides connect C1534–C1544, C1539–C1557, C1551–C1572, C1584–C1620, C1588–C1625, C1599–C1610, C1640–C1680, C1644–C1685, and C1654–C1664. TSP type-1 domains are found at residues 1572–1626 (CGAW…EACP) and 1628–1686 (DGEW…EGCL). An N-linked (GlcNAc...) asparagine glycan is attached at N1598. A glycan (N-linked (GlcNAc...) asparagine) is linked at N1687. In terms of domain architecture, TIL 4 spans 1692 to 1746 (GELVFRTCAPCPLTCDDISGQAACPPDRPCSSPGCWCPDGKVLNTEGQCVRPRQC). EGF-like domains are found at residues 1702–1741 (CPLTCDDISGQAACPPDRPCSSPGCWCPDGKVLNTEGQCV) and 1742–1768 (RPRQCPCLVDGAHYWPGQRIKMDCQLC). Positions 1771-1827 (DCGWSSWSPWAECLGPCSSQSLQWSFRSPNNPRLSGHGRQCRGIHRKARRCQTEACE) constitute a TSP type-1 3 domain. Intrachain disulfides connect C1772-C1811, C1783-C1787, and C1821-C1826. Positions 1827–1887 (EGCEQWGLMY…GMGESCCHCA (61 aa)) constitute a VWFC 2 domain. 2 N-linked (GlcNAc...) asparagine glycosylation sites follow: N1892 and N1989. In terms of domain architecture, F5/8 type C spans 1929–2085 (CYSPLGLAGL…IFLWVELLGL (157 aa)). An LDL-receptor class A 8 domain is found at 2091–2127 (LCPGSRHRCASGECAPKGGPCDGAVDCDDGSDEEGCG). Disulfide bonds link C2092-C2104, C2099-C2117, and C2111-C2126. The disordered stretch occupies residues 2119 to 2209 (DGSDEEGCGS…TFPPGAKSLH (91 aa)). Over residues 2130–2144 (HASTTSRTPALSPTQ) the composition is skewed to polar residues. Residues 2148-2158 (FPREVSEDLRQ) show a composition bias toward basic and acidic residues. 2 stretches are compositionally biased toward polar residues: residues 2164 to 2173 (TSHSPPSSGE) and 2190 to 2201 (QPMQTLSATSTF). LDL-receptor class A domains lie at 2242 to 2278 (PCGPGQVPCDVLGCVEQEQLCDGREDCLDGSDEQHCA) and 2299 to 2335 (LCSPSQLRCGSGECLPFEHRCDLQVNCQDGSDEDNCV). Disulfide bonds link C2243–C2255, C2250–C2268, C2262–C2277, C2300–C2312, C2307–C2325, C2319–C2334, C2337–C2373, C2348–C2352, C2383–C2388, C2403–C2440, C2407–C2445, and C2418–C2430. TSP type-1 domains lie at 2336–2389 (DCVL…QACP) and 2391–2446 (AGAW…QLCP). Residues 2468 to 2511 (VPPCPPSCLDPEANRSCSGHCMEGCRCPPGLLLQDSHCLPLSEC) enclose the TIL 5 domain. 2 N-linked (GlcNAc...) asparagine glycosylation sites follow: N2481 and N2530. TSP type-1 domains follow at residues 2551-2605 (SCGW…TDCG), 2609-2664 (PGWT…PVCP), and 2666-2719 (PSAW…HPCT). 9 cysteine pairs are disulfide-bonded: C2552-C2590, C2563-C2567, C2600-C2604, C2620-C2658, C2624-C2663, C2640-C2648, C2678-C2713, C2682-C2718, and C2693-C2703. Residues N2772 and N2802 are each glycosylated (N-linked (GlcNAc...) asparagine). TSP type-1 domains lie at 2820-2875 (ACGW…RPCR) and 2876-2919 (GPGA…QPCA). Cystine bridges form between C2821–C2859, C2832–C2836, and C2869–C2874. N2897, N2952, N2999, and N3009 each carry an N-linked (GlcNAc...) asparagine glycan. In terms of domain architecture, TIL 6 spans 2926-2978 (CPEDQQWLDCAQGPASCAHLSIPGEANQTCHPGCYCLSGMLLLNNVCVPVQDC). 2 TSP type-1 domains span residues 3019 to 3086 (QPAW…PGCN) and 3088 to 3143 (AGGW…QPCP). 6 disulfide bridges follow: C3031–C3080, C3035–C3085, C3046–C3070, C3100–C3137, C3104–C3142, and C3115–C3127. Residue N3146 is glycosylated (N-linked (GlcNAc...) asparagine). One can recognise a TIL 7 domain in the interval 3151-3201 (EGAEYSPCGPPCPRSCDDLVHCVWRCQPGCYCPLGKVLSADGAICVKPSYC). N3235 is a glycosylation site (N-linked (GlcNAc...) asparagine). TSP type-1 domains lie at 3244–3306 (SGDW…TACP) and 3308–3363 (DGAW…TLCT). Cystine bridges form between C3256–C3299, C3260–C3305, C3271–C3283, C3320–C3355, C3323–C3362, and C3333–C3345. An N-linked (GlcNAc...) asparagine glycan is attached at N3301. N3357 carries an N-linked (GlcNAc...) asparagine glycan. Residues 3365 to 3421 (CGGGQDLLPCGQPCPHSCQDLSLGSTCQPGSAGCQSGCGCPPGQLSQDGLCVFPVDC) enclose the TIL 8 domain. N-linked (GlcNAc...) asparagine glycans are attached at residues N3435 and N3462. Residues 3481 to 3529 (PGIWSSWGPWEKCSVSCGGGEQLRSRQCARPPCPGLAQQSRICHIHVCR) form the TSP type-1 15 domain. 3 disulfide bridges follow: C3493–C3523, C3497–C3528, and C3508–C3513. An N-linked (GlcNAc...) asparagine glycan is attached at N3638. TSP type-1 domains lie at 3657–3713 (HGSF…PECP), 3727–3779 (AGGW…PSCA), 3793–3849 (NCFW…RACP), and 3851–3906 (PGGW…MPCE). Intrachain disulfides connect C3669–C3707, C3673–C3712, and C3685–C3697. A glycan (N-linked (GlcNAc...) asparagine) is linked at N3761. 6 disulfide bridges follow: C3794/C3830, C3805/C3809, C3843/C3848, C3863/C3900, C3867/C3905, and C3878/C3890. Residues 3909–3964 (CPAGMEMVSCANHCPYSCSDLQEGGMCQEDQACQLGCRCSEGFLEQDGGCVPVGHC) form the TIL 9 domain. N3986 carries N-linked (GlcNAc...) asparagine glycosylation. 4 consecutive TSP type-1 domains span residues 4006 to 4059 (HCAW…VPCP), 4100 to 4155 (PRGW…QLCL), 4157 to 4213 (KLER…GPCQ), and 4215 to 4269 (DCTW…GNCS). Cystine bridges form between C4007–C4043, C4018–C4022, C4053–C4058, C4112–C4149, C4116–C4154, C4127–C4139, C4169–C4207, C4173–C4212, C4184–C4195, C4216–C4253, C4227–C4229, and C4263–C4268. N4196 carries N-linked (GlcNAc...) asparagine glycosylation. N4267 is a glycosylation site (N-linked (GlcNAc...) asparagine). Residues 4273-4328 (CPPPFEFQSCGSPCAGLCATHLNHRLCQDLPPCQPGCYCPKGLLEQAGSCILPEQC) form the TIL 10 domain. Residues N4408 and N4463 are each glycosylated (N-linked (GlcNAc...) asparagine). In terms of domain architecture, TSP type-1 24 spans 4465-4516 (TCQWGPWGPWSPCQMPCSGGFKLRWRVARDTSAGECPGPWAQTESCNMGSCP). 3 disulfide bridges follow: C4466–C4500, C4477–C4481, and C4510–C4515. The TIL 11 domain occupies 4530 to 4576 (DCANQCPRSCADLWDGVQCLQGPCSPGCRCPPGQLVQDGHCVPISSC). N-linked (GlcNAc...) asparagine glycosylation is found at N4584, N4601, and N4606. Residues 4616–4669 (CPVLGPWSAWSECSAVCGKGTMVRHRSCEEHPDREPCQALDLQQWQECNLQACP) enclose the TSP type-1 25 domain. 3 disulfide bridges follow: C4628/C4663, C4632/C4668, and C4643/C4652. The 55-residue stretch at 4671–4725 (CPPGQVLSTCATMCPSLCSHLWPGTICVREPCQLGCGCPGGQLLYNGTCIPPEAC) folds into the TIL 12 domain. Residues N4716, N4756, N4799, and N4806 are each glycosylated (N-linked (GlcNAc...) asparagine). The TIL 13 domain maps to 4777–4835 (CAPGEIWQHGKLGPCEKTCPEMNMTQAWSNCTEAQAPGCVCQLGYFRSQTGLCVPEDHC). The VWFC 3 domain occupies 4835-4893 (CECWHHGSPHLPGSEWQEACESCRCLHGKSVCIRHCPELSCAQGEVIMQEPGSCCPICQ). Cystine bridges form between C4892/C4952, C4918/C4969, C4928/C4985, and C4932/C4987. The CTCK domain maps to 4892–4991 (CQQDTLKEEP…IHSCQCSACQ (100 aa)). The N-linked (GlcNAc...) asparagine glycan is linked to N4912.

Belongs to the thrombospondin family. In terms of tissue distribution, subcommissural organ.

It localises to the secreted. It is found in the extracellular space. Its function is as follows. Involved in the modulation of neuronal aggregation. May be involved in developmental events during the formation of the central nervous system. In Mus musculus (Mouse), this protein is SCO-spondin.